Here is a 142-residue protein sequence, read N- to C-terminus: Peptide methionine sulfoxide reductase MsrB (142 aa).

The MsrB domain maps to 2-125 (LKKDKSELTD…NSAAIQFIPY (124 aa)). The active-site Nucleophile is cysteine 114.

Belongs to the MsrB Met sulfoxide reductase family.

It catalyses the reaction L-methionyl-[protein] + [thioredoxin]-disulfide + H2O = L-methionyl-(R)-S-oxide-[protein] + [thioredoxin]-dithiol. In Staphylococcus aureus (strain Mu3 / ATCC 700698), this protein is Peptide methionine sulfoxide reductase MsrB.